The primary structure comprises 186 residues: Chromosome-anchoring protein RacA (186 aa).

A DNA-binding region (H-T-H motif) is located at residues Thr3–Gln23. The stretch at Glu90–Arg170 forms a coiled coil. A disordered region spans residues Glu158–Phe186. Positions Met160–Lys175 are enriched in basic and acidic residues.

The protein belongs to the RacA family.

The protein resides in the cytoplasm. In terms of biological role, required for the formation of axial filaments and for anchoring the origin regions at the cell poles in sporulating cells, thus ensuring proper chromosome segregation in the prespore. Binds in a dispersed manner throughout the chromosome but preferentially to sites clustered in the origin portion of the chromosome, causing condensation of the chromosome and its remodeling into an elongated, anchored structure. The chain is Chromosome-anchoring protein RacA from Bacillus licheniformis (strain ATCC 14580 / DSM 13 / JCM 2505 / CCUG 7422 / NBRC 12200 / NCIMB 9375 / NCTC 10341 / NRRL NRS-1264 / Gibson 46).